The following is a 159-amino-acid chain: Flagellar assembly factor FliW (159 aa).

Belongs to the FliW family. As to quaternary structure, interacts with translational regulator CsrA and flagellin(s).

It is found in the cytoplasm. Its function is as follows. Acts as an anti-CsrA protein, binds CsrA and prevents it from repressing translation of its target genes, one of which is flagellin. Binds to flagellin and participates in the assembly of the flagellum. The sequence is that of Flagellar assembly factor FliW from Geobacter sulfurreducens (strain ATCC 51573 / DSM 12127 / PCA).